Here is an 845-residue protein sequence, read N- to C-terminus: Receptor-like protein Cf-9 homolog (845 aa).

The first 19 residues, 1 to 19 (MGCVKLVFFMLLKLDLLEF), serve as a signal peptide directing secretion. An N-cap region spans residues 20-70 (KNMFTVNPNASDYCYDYTDQRMQSYPRTLFWNKSTDCCSWDGIHCDETTGQ). Topologically, residues 20–794 (KNMFTVNPNA…EEDSPMISWQ (775 aa)) are extracellular. 3 N-linked (GlcNAc...) asparagine glycosylation sites follow: Asn-28, Asn-51, and Asn-88. Residues 71 to 94 (VVELDLRCSQLQGKFHSNSSLFQL) form an LRR 1; degenerate repeat. LRR repeat units lie at residues 95-118 (SNLK…KFGE), 119-143 (FSDL…ISHL), 144-171 (SKLH…LKNL), 172-193 (TQLR…SNFS), 194-217 (SHLT…VFHL), 219-242 (DLEF…KWNS), 244-266 (ASLM…SFSH), 267-291 (LTSL…LWNL), 292-316 (TNIE…RFEK), 318-338 (KRLS…SFNR), 340-364 (WTQL…VSGL), 365-388 (QNLG…IFSL), 390-410 (SLVV…EFKS), 411-434 (KTLS…LLNQ), 436-458 (SLQF…ICNL), 459-482 (KTLM…VGER), 484-506 (EYLL…TFSI), 507-531 (GNSF…LINC), 532-554 (KYLK…WLGY), 555-579 (LSQL…GSTN), 581-605 (FMRL…ILGN), 649-672 (LDSN…IIGD), 673-696 (LVGL…SFQN), 698-721 (SVLE…LASL), and 723-741 (FLEV…IPKG). Asn-131, Asn-170, Asn-183, and Asn-191 each carry an N-linked (GlcNAc...) asparagine glycan. N-linked (GlcNAc...) asparagine glycosylation is present at Asn-241. N-linked (GlcNAc...) asparagine glycosylation is found at Asn-279 and Asn-290. N-linked (GlcNAc...) asparagine glycans are attached at residues Asn-337, Asn-360, Asn-378, and Asn-398. Asn-446 carries N-linked (GlcNAc...) asparagine glycosylation. N-linked (GlcNAc...) asparagine glycosylation is present at Asn-501. Asn-545 is a glycosylation site (N-linked (GlcNAc...) asparagine). N-linked (GlcNAc...) asparagine glycans are attached at residues Asn-656, Asn-680, and Asn-696. N-linked (GlcNAc...) asparagine glycosylation is found at Asn-728 and Asn-749. The tract at residues 742-794 (KQFDSFGNTSYQGNDGLRGFPLSKLCGVDDQVTTPAELDQEEEEEDSPMISWQ) is C-cap/acidic domain. Residues 795 to 815 (GVLVGYGCGLVIGLSVIYIMW) form a helical membrane-spanning segment. Over 816–845 (STQYPAWFSRMDLKLEHIITTRMKKHKKRY) the chain is Cytoplasmic.

It belongs to the RLP family.

It is found in the cell membrane. At the opposite of its homolog Cf-9 found in S.pimpinellifolium, was not able to confer resistance to the fungal pathogen C.fulvum. In Solanum lycopersicum (Tomato), this protein is Receptor-like protein Cf-9 homolog.